A 116-amino-acid chain; its full sequence is Large ribosomal subunit protein bL17 (116 aa).

This sequence belongs to the bacterial ribosomal protein bL17 family. In terms of assembly, part of the 50S ribosomal subunit. Contacts protein L32.

In Helicobacter pylori (strain G27), this protein is Large ribosomal subunit protein bL17.